Reading from the N-terminus, the 216-residue chain is Fibroblast growth factor 19 (216 aa).

The signal sequence occupies residues 1-24; sequence MRSGCVVVHVWILAGLWLAVAGRP. 2 disulfide bridges follow: cysteine 58-cysteine 70 and cysteine 102-cysteine 120.

Belongs to the heparin-binding growth factors family. In terms of assembly, interacts with FGFR1, FGFR2, FGFR3 and FGFR4. Affinity between fibroblast growth factors (FGFs) and their receptors is increased by KL, KLB and heparan sulfate glycosaminoglycans that function as coreceptors. Interacts with KL; this interaction is direct. Interacts with KLB; this interaction is direct. Interacts with FGFR4 in the presence of heparin, KL or KLB. Interacts with MALRD1. As to expression, expressed in fetal brain, cartilage, retina, and adult gall bladder.

The protein resides in the secreted. Involved in the suppression of bile acid biosynthesis through down-regulation of CYP7A1 expression, following positive regulation of the JNK and ERK1/2 cascades. Stimulates glucose uptake in adipocytes. Activity requires the presence of KLB and FGFR4. This is Fibroblast growth factor 19 (FGF19) from Homo sapiens (Human).